The following is a 90-amino-acid chain: Probable Fe(2+)-trafficking protein (90 aa).

Belongs to the Fe(2+)-trafficking protein family.

Functionally, could be a mediator in iron transactions between iron acquisition and iron-requiring processes, such as synthesis and/or repair of Fe-S clusters in biosynthetic enzymes. This chain is Probable Fe(2+)-trafficking protein, found in Azoarcus sp. (strain BH72).